Reading from the N-terminus, the 483-residue chain is MKTLNRRDFPGAQYPERIIQFGEGNFLRAFVDWQIDLLNEHTDLNSGVVVVRPIETSFPPSLSTQDGLYTTIIRGLNEKGEAVSDARLIRSVNREISVYSEYDEFLKLAHNPEMRFVFSNTTEAGISYHAGDKFDDAPAVSYPAKLTRLLFERFSHFNGALDKGWIIIPCELIDYNGDALRELVLRYAQEWALPEAFIQWLDQANSFCSTLVDRIVTGYPRDEVAKLEEELGYHDGFLDTAEHFYLFVIQGPKSLATELRLDKYPLNVLIVDDIKPYKERKVAILNGAHTALVPVAFQAGLDTVGEAMNDAEICAFVEKAIYEEIIPVLDLPRDELESFASAVTGRFRNPYIKHQLLSIALNGMTKFRTRILPQLLAGQKANGTLPARLTFALAALIAFYRGERNGETYPVQDDAHWLERYQQLWSQHRDRVIGTQELVAIVLAEKDHWEQDLTQVPGLVEQVANDLDVILEKGMREAVRPLC.

Residue 18–29 coordinates NAD(+); it reads IIQFGEGNFLRA.

This sequence belongs to the mannitol dehydrogenase family. UxaB subfamily.

It carries out the reaction D-altronate + NAD(+) = keto-D-tagaturonate + NADH + H(+). It participates in carbohydrate metabolism; pentose and glucuronate interconversion. The sequence is that of Altronate oxidoreductase from Escherichia coli O17:K52:H18 (strain UMN026 / ExPEC).